The following is a 493-amino-acid chain: Cytochrome P450 Tp9025 (493 aa).

A helical; Signal-anchor for type II membrane protein membrane pass occupies residues 1 to 21; it reads MALYIIFLLIASSFILFSFIF. N-linked (GlcNAc...) asparagine glycosylation is found at asparagine 209 and asparagine 411. A heme-binding site is contributed by cysteine 433.

This sequence belongs to the cytochrome P450 family. The cofactor is heme.

It localises to the membrane. It participates in secondary metabolite biosynthesis; terpenoid biosynthesis. Probably involved in the biosynthesis of germacrene-derived sesquiterpene lactones. This chain is Cytochrome P450 Tp9025, found in Tanacetum parthenium (Feverfew).